Here is a 328-residue protein sequence, read N- to C-terminus: Naphthalene 1,2-dioxygenase/salicylate 5-hydroxylase systems, ferredoxin--NAD(P)(+), reductase component (328 aa).

The 2Fe-2S ferredoxin-type domain maps to 1 to 89; sequence MELVVEPLNL…DCTIEIPESD (89 aa). [2Fe-2S] cluster is bound by residues cysteine 35, cysteine 40, cysteine 43, and cysteine 73. Residues 96–193 form the FAD-binding FR-type domain; it reads ARIVKGTVTA…SGPLGTAYLR (98 aa).

It belongs to the bacterial ring-hydroxylating dioxygenase ferredoxin reductase family. In terms of assembly, ferredoxin reductase NagAa belongs to both the salicylate 5-hydroxylase (S5H) and the naphthalene 1,2-dioxygenase (NDO) multicomponent enzyme systems. The NDO multicomponent enzyme system is composed of an electron transfer component and a dioxygenase component (iron sulfur protein (ISP)). The electron transfer component is composed of a ferredoxin reductase (NagAa) and a ferredoxin (NagAb), and the dioxygenase component is formed by a large alpha subunit (NagAc) and a small beta subunit (NagAd). The S5H multicomponent enzyme system is composed of an electron transfer component and a monooxygenase component. The electron transfer component is comprised of a ferredoxin reductase (NagAa) and a ferredoxin (NagAb), and the monooxygenase component is formed by a large subunit (NagG) and a small subunit (NagH). [2Fe-2S] cluster serves as cofactor. Requires FAD as cofactor.

It catalyses the reaction 2 reduced [2Fe-2S]-[ferredoxin] + NAD(+) + H(+) = 2 oxidized [2Fe-2S]-[ferredoxin] + NADH. The enzyme catalyses 2 reduced [2Fe-2S]-[ferredoxin] + NADP(+) + H(+) = 2 oxidized [2Fe-2S]-[ferredoxin] + NADPH. It participates in aromatic compound metabolism; naphthalene degradation. Functionally, component of two multicomponent enzyme systems which are involved in the catabolism of naphthalene. Plays a role as an electron transfer component for both salicylate 5-hydroxylase (S5H) and naphthalene 1,2-dioxygenase (NDO) systems, by transferring electrons from NAD(P)H to the oxygenase component via the ferredoxin NagAb. The electron transport chain from the two systems can use both NADH and NADPH as electron donors at approximately similar rates. In Ralstonia sp, this protein is Naphthalene 1,2-dioxygenase/salicylate 5-hydroxylase systems, ferredoxin--NAD(P)(+), reductase component.